The chain runs to 431 residues: Enolase (431 aa).

Q167 serves as a coordination point for (2R)-2-phosphoglycerate. The active-site Proton donor is E209. The Mg(2+) site is built by D246, E290, and D317. (2R)-2-phosphoglycerate is bound by residues K342, R371, S372, and K393. The Proton acceptor role is filled by K342.

The protein belongs to the enolase family. In terms of assembly, component of the RNA degradosome, a multiprotein complex involved in RNA processing and mRNA degradation. Requires Mg(2+) as cofactor.

Its subcellular location is the cytoplasm. It is found in the secreted. It localises to the cell surface. The enzyme catalyses (2R)-2-phosphoglycerate = phosphoenolpyruvate + H2O. It functions in the pathway carbohydrate degradation; glycolysis; pyruvate from D-glyceraldehyde 3-phosphate: step 4/5. Its function is as follows. Catalyzes the reversible conversion of 2-phosphoglycerate (2-PG) into phosphoenolpyruvate (PEP). It is essential for the degradation of carbohydrates via glycolysis. This chain is Enolase, found in Yersinia enterocolitica serotype O:8 / biotype 1B (strain NCTC 13174 / 8081).